The primary structure comprises 347 residues: MIKEYYGAETFILNKDFAYILVIGTTDVSLIPGLTIAGATPELTHFTPAADAEYVLLGKCKSINTIPVSPTGIPTPALLTRASLSFINPLKIVVNAGSRILPKIPYIDLQGEPGKDIRKQALSMEKVNNIIENSIKLGEELSNEYELIMIGESIPAGTTTAMATLLALGYDAMDKVSSASPDNPKELKRKVVEEALRNLPTDPLQRLAKVSDPVLLGVAGTSLGFKGKILLAGGTQMTAAAAIINEFDKNKLKDITIGTTKWIVEDKFADMLSLAKQVGVKVLASMLDLSISAYEGIRAYEKGYVKEGVGAGGSAIMALVKGVSNNTLVRKIDELYGELVGSSNLHI.

This sequence belongs to the UPF0284 family.

This is UPF0284 protein M1425_0030 from Saccharolobus islandicus (strain M.14.25 / Kamchatka #1) (Sulfolobus islandicus).